We begin with the raw amino-acid sequence, 376 residues long: Putative glutamate--cysteine ligase 2-1 (376 aa).

The protein belongs to the glutamate--cysteine ligase type 2 family. YbdK subfamily.

The catalysed reaction is L-cysteine + L-glutamate + ATP = gamma-L-glutamyl-L-cysteine + ADP + phosphate + H(+). ATP-dependent carboxylate-amine ligase which exhibits weak glutamate--cysteine ligase activity. The polypeptide is Putative glutamate--cysteine ligase 2-1 (Mycobacterium sp. (strain JLS)).